A 353-amino-acid polypeptide reads, in one-letter code: uncharacterized protein (353 aa).

In terms of domain architecture, HTH luxR-type spans 18 to 83 (NIEFPCLLSE…TLWRDVFLRF (66 aa)). The H-T-H motif DNA-binding region spans 42 to 61 (VNEISKRRNRSIKTVSCQKM). Positions 98 to 350 (NSSVLPVVSS…AFVRKLLASL (253 aa)) constitute an EAL domain.

This is an uncharacterized protein from Escherichia coli (strain K12).